Reading from the N-terminus, the 596-residue chain is Elongation factor 4 (596 aa).

The tr-type G domain maps to 2-184 (KHIRNFSIIA…EIVAKIPPPV (183 aa)). GTP contacts are provided by residues 14–19 (DHGKST) and 131–134 (NKID).

This sequence belongs to the TRAFAC class translation factor GTPase superfamily. Classic translation factor GTPase family. LepA subfamily.

The protein resides in the cell inner membrane. The enzyme catalyses GTP + H2O = GDP + phosphate + H(+). Its function is as follows. Required for accurate and efficient protein synthesis under certain stress conditions. May act as a fidelity factor of the translation reaction, by catalyzing a one-codon backward translocation of tRNAs on improperly translocated ribosomes. Back-translocation proceeds from a post-translocation (POST) complex to a pre-translocation (PRE) complex, thus giving elongation factor G a second chance to translocate the tRNAs correctly. Binds to ribosomes in a GTP-dependent manner. This chain is Elongation factor 4, found in Shewanella denitrificans (strain OS217 / ATCC BAA-1090 / DSM 15013).